The sequence spans 144 residues: Transcriptional regulator SlyA (144 aa).

In terms of domain architecture, HTH marR-type spans 2–135; that stretch reads ESPLGSDLAR…LITLIAKLEH (134 aa). The H-T-H motif DNA-binding region spans 49–72; it reads QIQLAKAIGIEQPSLVRTLDQLEE.

The protein belongs to the SlyA family. Homodimer.

Its function is as follows. Transcription regulator that can specifically activate or repress expression of target genes. This is Transcriptional regulator SlyA from Escherichia coli (strain 55989 / EAEC).